A 22-amino-acid polypeptide reads, in one-letter code: Melittin-like peptide (22 aa).

Glutamine 22 carries the glutamine amide modification.

In terms of tissue distribution, expressed by the skin dorsal glands.

Its subcellular location is the secreted. This is Melittin-like peptide from Rana temporaria (European common frog).